A 428-amino-acid chain; its full sequence is 3-phosphoshikimate 1-carboxyvinyltransferase (428 aa).

3 residues coordinate 3-phosphoshikimate: Lys-19, Ser-20, and Arg-24. A phosphoenolpyruvate-binding site is contributed by Lys-19. Residues Gly-91 and Arg-119 each coordinate phosphoenolpyruvate. 4 residues coordinate 3-phosphoshikimate: Ser-164, Gln-166, Asp-312, and Lys-339. Gln-166 serves as a coordination point for phosphoenolpyruvate. The Proton acceptor role is filled by Asp-312. Phosphoenolpyruvate-binding residues include Arg-343 and Arg-386.

This sequence belongs to the EPSP synthase family. Monomer.

It is found in the cytoplasm. The enzyme catalyses 3-phosphoshikimate + phosphoenolpyruvate = 5-O-(1-carboxyvinyl)-3-phosphoshikimate + phosphate. The protein operates within metabolic intermediate biosynthesis; chorismate biosynthesis; chorismate from D-erythrose 4-phosphate and phosphoenolpyruvate: step 6/7. Its function is as follows. Catalyzes the transfer of the enolpyruvyl moiety of phosphoenolpyruvate (PEP) to the 5-hydroxyl of shikimate-3-phosphate (S3P) to produce enolpyruvyl shikimate-3-phosphate and inorganic phosphate. The chain is 3-phosphoshikimate 1-carboxyvinyltransferase from Bacillus pumilus (strain SAFR-032).